A 371-amino-acid polypeptide reads, in one-letter code: Capsular polysaccharide phosphotransferase cps12A (371 aa).

Belongs to the stealth family.

Its function is as follows. Part of a capsular polysaccharide synthesis locus. The chain is Capsular polysaccharide phosphotransferase cps12A (cps12A) from Actinobacillus pleuropneumoniae (Haemophilus pleuropneumoniae).